We begin with the raw amino-acid sequence, 410 residues long: Neurotensin receptor type 2 (410 aa).

Residues 1–32 (METSSPRPPRPSSNPGLSLDARLGVDTRLWAK) are Extracellular-facing. The chain crosses the membrane as a helical span at residues 33–55 (VLFTALYALIWALGAAGNALSAH). The Cytoplasmic portion of the chain corresponds to 56 to 64 (VVLKARAGR). A helical membrane pass occupies residues 65–87 (AGRLRHHVLSLALAGLLLLLVGV). At 88–109 (PVELYSFVWFHYPWVFGDLGCR) the chain is on the extracellular side. Cys108 and Cys194 are disulfide-bonded. A helical membrane pass occupies residues 110–131 (GYYFVHELCAYATVLSVAGLSA). The Cytoplasmic portion of the chain corresponds to 132-154 (ERCLAVCQPLRARSLLTPRRTRW). The chain crosses the membrane as a helical span at residues 155-176 (LVALSWAASLGLALPMAVIMGQ). Over 177 to 217 (KHELETADGEPEPASRVCTVLVSRTALQVFIQVNVLVSFVL) the chain is Extracellular. A helical membrane pass occupies residues 218–237 (PLALTAFLNGVTVSHLLALC). Over 238 to 297 (SQVPSTSTPGSSTPSRLELLSEEGLLSFIVWKKTFIQGGQVSLVRHKDVRRIRSLQRSVQ) the chain is Cytoplasmic. A helical transmembrane segment spans residues 298–318 (VLRAIVVMYVICWLPYHARRL). Residues 319-337 (MYCYVPDDAWTDPLYNFYH) lie on the Extracellular side of the membrane. A helical transmembrane segment spans residues 338–358 (YFYMVTNTLFYVSSAVTPLLY). Residues 359-410 (NAVSSSFRKLFLEAVSSLCGEHHPMKRLPPKPQSPTLMDTASGFGDPPETRT) lie on the Cytoplasmic side of the membrane. Cys377 carries S-palmitoyl cysteine lipidation. Positions 381–410 (HPMKRLPPKPQSPTLMDTASGFGDPPETRT) are disordered.

The protein belongs to the G-protein coupled receptor 1 family. Neurotensin receptor subfamily. NTSR2 sub-subfamily. In terms of tissue distribution, expressed in prostate (at protein level).

It localises to the cell membrane. Functionally, receptor for the tridecapeptide neurotensin. It is associated with G proteins that activate a phosphatidylinositol-calcium second messenger system. This chain is Neurotensin receptor type 2 (NTSR2), found in Homo sapiens (Human).